A 200-amino-acid polypeptide reads, in one-letter code: LexA repressor (200 aa).

The segment at residues 27–47 is a DNA-binding region (H-T-H motif); it reads VREICNAVELRSTSTVHGHLK. Catalysis depends on for autocatalytic cleavage activity residues serine 124 and lysine 161.

Belongs to the peptidase S24 family. As to quaternary structure, homodimer.

It carries out the reaction Hydrolysis of Ala-|-Gly bond in repressor LexA.. Represses a number of genes involved in the response to DNA damage (SOS response), including recA and lexA. In the presence of single-stranded DNA, RecA interacts with LexA causing an autocatalytic cleavage which disrupts the DNA-binding part of LexA, leading to derepression of the SOS regulon and eventually DNA repair. The protein is LexA repressor of Clostridium tetani (strain Massachusetts / E88).